Reading from the N-terminus, the 64-residue chain is Large ribosomal subunit protein bL35 (64 aa).

The disordered stretch occupies residues 1–25 (MPKLKTHSGAAKRFKKTATGKVKRS).

It belongs to the bacterial ribosomal protein bL35 family.

This Koribacter versatilis (strain Ellin345) protein is Large ribosomal subunit protein bL35.